Consider the following 102-residue polypeptide: Integration host factor subunit beta (102 aa).

It belongs to the bacterial histone-like protein family. In terms of assembly, heterodimer of an alpha and a beta chain.

In terms of biological role, this protein is one of the two subunits of integration host factor, a specific DNA-binding protein that functions in genetic recombination as well as in transcriptional and translational control. The chain is Integration host factor subunit beta (ihfB) from Rhizobium radiobacter (Agrobacterium tumefaciens).